Reading from the N-terminus, the 545-residue chain is Membrane protein insertase YidC (545 aa).

4 consecutive transmembrane segments (helical) span residues 350 to 370, 424 to 444, 461 to 481, and 498 to 518; these read IIGNWGWAIIVLTIIVKAVLY, LPMLLQIPVFIGLYWALFASV, ADPYYILPIIMAATMFAQTYL, and PLVFSVMFFFFPAGLVLYWVV.

This sequence belongs to the OXA1/ALB3/YidC family. Type 1 subfamily. In terms of assembly, interacts with the Sec translocase complex via SecD. Specifically interacts with transmembrane segments of nascent integral membrane proteins during membrane integration.

The protein resides in the cell inner membrane. Its function is as follows. Required for the insertion and/or proper folding and/or complex formation of integral membrane proteins into the membrane. Involved in integration of membrane proteins that insert both dependently and independently of the Sec translocase complex, as well as at least some lipoproteins. Aids folding of multispanning membrane proteins. This is Membrane protein insertase YidC from Neisseria meningitidis serogroup B (strain ATCC BAA-335 / MC58).